The chain runs to 733 residues: Neutral ceramidase 3 (733 aa).

A signal peptide spans 1 to 25 (MTRWSMSMHCTLFLLFLLRLTCIFS). Residue Ser307 is the Nucleophile of the active site. Residue Asn325 is glycosylated (N-linked (GlcNAc...) asparagine).

The protein belongs to the neutral ceramidase family.

The protein localises to the secreted. Its subcellular location is the endoplasmic reticulum. It is found in the golgi apparatus. It carries out the reaction an N-acylsphing-4-enine + H2O = sphing-4-enine + a fatty acid. Functionally, hydrolyzes the sphingolipid ceramide into sphingosine and free fatty acid. Promotes oxidative stress resistance. This chain is Neutral ceramidase 3, found in Arabidopsis thaliana (Mouse-ear cress).